Here is a 747-residue protein sequence, read N- to C-terminus: MQGGEPVSTMKVSESEGKLEGQATAVTPNKNSSCGGGISSSSSSRGGSAKGWQYSDHMENVYGYLMKYTNLVTGWQYRFFVLNNEAGLLEYFVNEQSRNQKPRGTLQLAGAVISPSDEDSHTFTVNAASGEQYKLRATDAKERQHWVSRLQICTQHHTEAIGKNNPPLKSRSFSLASSSNSPISQRRPSQNAISFFNVGHSKLQSLSKRTNLPPDHLVEVREMMSHAEGQQRDLIRRIECLPTSGHLSSLDQDLLMLKATSMATMNCLNDCFHILQLQHASHQKGSLPSGTTIEWLEPKISLSNHYKNGADQPFATDQSKPVAVPEEQPVAESGLLAREPEEINADDEIEDTCDHKEDDLGAVEEQRSVILHLLSQLKLGMDLTRVVLPTFILEKRSLLEMYADFMSHPDLFIAITNGATAEDRMIRFVEYYLTSFHEGRKGAIAKKPYNPIIGETFHCSWKMPKSEVASSVFSSSSTQGVTNHAPLSGESLTQVGSDCYTVRFVAEQVSHHPPVSGFYAECTERKMCVNAHVWTKSKFLGMSIGVTMVGEGILSLLEHGEEYTFSLPCAYARSILTVPWVELGGKVSVNCAKTGYSASITFHTKPFYGGKLHRVTAEVKHNITNTVVCRVQGEWNSVLEFTYSNGETKYVDLTKLAVTKKRVRPLEKQDPFESRRLWKNVTDSLRESEIDKATEHKHTLEERQRTEERHRTETGTPWKTKYFIKEGDGWVYHKPLWKIIPTTQPAE.

The residue at position 1 (Met1) is an N-acetylmethionine. The disordered stretch occupies residues 1-50 (MQGGEPVSTMKVSESEGKLEGQATAVTPNKNSSCGGGISSSSSSRGGSAK). A Phosphoserine modification is found at Ser15. At Thr27 the chain carries Phosphothreonine. One can recognise a PH domain in the interval 58–155 (MENVYGYLMK…WVSRLQICTQ (98 aa)). Tyr62 is modified (phosphotyrosine). Residues 158–188 (TEAIGKNNPPLKSRSFSLASSSNSPISQRRP) form a disordered region. Residues 170–184 (SRSFSLASSSNSPIS) show a composition bias toward low complexity. A phosphoserine mark is found at Ser172, Ser174, Ser177, Ser181, Ser184, and Ser189. A compositionally biased stretch (basic and acidic residues) spans 689-713 (EIDKATEHKHTLEERQRTEERHRTE). Positions 689–714 (EIDKATEHKHTLEERQRTEERHRTET) are disordered.

It belongs to the OSBP family. As to quaternary structure, heterodimer with OSBPL9. Present at highest levels in ovary, testis, kidney, liver, stomach, brain, and adipose tissue. Strong expression (at protein level) in epithelial cells of kidney tubules, testicular tubules, caecum, and skin. Present at low levels in subcutaneous and visceral adipose tissue (at protein level).

The protein localises to the late endosome membrane. It localises to the golgi apparatus. Its subcellular location is the trans-Golgi network membrane. It catalyses the reaction a 1,2-diacyl-sn-glycero-3-phospho-(1D-myo-inositol 4-phosphate)(out) + a 1,2-diacyl-sn-glycero-3-phospho-L-serine(in) = a 1,2-diacyl-sn-glycero-3-phospho-(1D-myo-inositol 4-phosphate)(in) + a 1,2-diacyl-sn-glycero-3-phospho-L-serine(out). In terms of biological role, plays a role in regulating ADIPOQ and FABP4 levels in differentiating adipocytes and is also involved in regulation of adipocyte triglyceride storage. Weakly binds 25-hydroxycholesterol. Interacts with OSBPL9 to function as lipid transfer proteins. Together they form a heterodimer that localizes at the ER-trans-Golgi membrane contact sites, and exchanges phosphatidylserine (1,2-diacyl-sn-glycero-3-phospho-L-serine, PS) for phosphatidylinositol-4-phosphate (1,2-diacyl-sn-glycero-3-phospho-(1D-myo-inositol 4-phosphate), PI(4)P) between the two organelles, a step that is critical for sphingomyelin synthesis in the Golgi complex. The polypeptide is Oxysterol-binding protein-related protein 11 (OSBPL11) (Homo sapiens (Human)).